Reading from the N-terminus, the 302-residue chain is Protocatechuate 4,5-dioxygenase beta chain (302 aa).

In terms of assembly, composed of two subunits (alpha and beta) in a 1:1 ratio. It depends on Fe(2+) as a cofactor.

It catalyses the reaction 3,4-dihydroxybenzoate + O2 = 4-carboxy-2-hydroxy-cis,cis-muconate 6-semialdehyde + H(+). In terms of biological role, responsible for the aromatic ring fission of protocatechuate. The protein is Protocatechuate 4,5-dioxygenase beta chain (ligB) of Sphingobium sp. (strain NBRC 103272 / SYK-6).